The sequence spans 473 residues: Argininosuccinate lyase (473 aa).

Belongs to the lyase 1 family. Argininosuccinate lyase subfamily.

Its subcellular location is the cytoplasm. It catalyses the reaction 2-(N(omega)-L-arginino)succinate = fumarate + L-arginine. The protein operates within amino-acid biosynthesis; L-arginine biosynthesis; L-arginine from L-ornithine and carbamoyl phosphate: step 3/3. The protein is Argininosuccinate lyase of Chelativorans sp. (strain BNC1).